The sequence spans 305 residues: MSKKLTFQEIILTLQQFWNDKGCMLMQAYDNEKGAGTMSPYTFLRAIGPEPWNAAYVEPSRRPADGRYGENPNRLYQHHQFQVVMKPSPSNIQELYLESLEKLGINPLEHDIRFVEDNWENPSTGSAGLGWEVWLDGMEITQFTYFQQVGGLATQPVTSEVTYGLERLASYIQEVDSVYDIEWSPGVKYGEIFLQPEYEHSKYSFEISDQVMLLENFEKFEKEASRALEEGLVHPAYDYVLKCSHTFNLLDARGAVSVTERAGYIARIRNLARLVAKTFVAERRKLGYPLLDEATRVELLKEETE.

It belongs to the class-II aminoacyl-tRNA synthetase family. Tetramer of two alpha and two beta subunits.

It localises to the cytoplasm. The enzyme catalyses tRNA(Gly) + glycine + ATP = glycyl-tRNA(Gly) + AMP + diphosphate. This is Glycine--tRNA ligase alpha subunit from Streptococcus uberis (strain ATCC BAA-854 / 0140J).